The following is a 117-amino-acid chain: Large ribosomal subunit protein uL18 (117 aa).

It belongs to the universal ribosomal protein uL18 family. As to quaternary structure, part of the 50S ribosomal subunit; part of the 5S rRNA/L5/L18/L25 subcomplex. Contacts the 5S and 23S rRNAs.

Functionally, this is one of the proteins that bind and probably mediate the attachment of the 5S RNA into the large ribosomal subunit, where it forms part of the central protuberance. The protein is Large ribosomal subunit protein uL18 of Laribacter hongkongensis (strain HLHK9).